Consider the following 55-residue polypeptide: Large ribosomal subunit protein bL33 (55 aa).

Belongs to the bacterial ribosomal protein bL33 family.

The polypeptide is Large ribosomal subunit protein bL33 (rpmG) (Buchnera aphidicola subsp. Acyrthosiphon pisum (strain APS) (Acyrthosiphon pisum symbiotic bacterium)).